A 392-amino-acid polypeptide reads, in one-letter code: Transcription factor GATA-4 (392 aa).

Residues 75–113 (SSAYNPGTSHPPVSPRFTFSSSPPITAPSSREVSYSSPL) form a disordered region. A compositionally biased stretch (polar residues) spans 91–113 (FTFSSSPPITAPSSREVSYSSPL). 2 consecutive GATA-type zinc fingers follow at residues 184-208 (CVNC…CNAC) and 238-262 (CANC…CNAC). Disordered regions lie at residues 279 to 339 (KEGI…HSNS) and 359 to 392 (MPSL…LVLA). The span at 284–293 (TRKRKPKNLS) shows a compositional bias: basic residues. The span at 302–316 (SGSDSLTPSTSSTNS) shows a compositional bias: low complexity. Over residues 364 to 380 (LSPQNHHSTFNPSPQAN) the composition is skewed to polar residues.

As to expression, expressed at high levels in heart, small intestine, stomach, ovary, and liver. Found at much lower levels in lung, spleen, pancreas and skin.

The protein resides in the nucleus. Functionally, transcriptional activator that binds to the consensus sequence 5'-AGATAG-3'. Associated with cardiac specification and can regulate cardiac-specific transcription during embryogenesis. Activates the expression of cardiac MHC-alpha in vivo. This is Transcription factor GATA-4 (gata4) from Xenopus laevis (African clawed frog).